The sequence spans 283 residues: NFU1 iron-sulfur cluster scaffold homolog, mitochondrial (283 aa).

The N-terminal 30 residues, 1 to 30, are a transit peptide targeting the mitochondrion; sequence MSKFLSQAALNTLRNTRLGSRQLVRSFAGI. The interval 182 to 250 is nifU; it reads IKELLDTRIR…IPEVESVEQV (69 aa). The [4Fe-4S] cluster site is built by Cys219 and Cys222.

It belongs to the NifU family.

The protein resides in the mitochondrion. Molecular scaffold for [Fe-S] cluster assembly of mitochondrial iron-sulfur proteins. The protein is NFU1 iron-sulfur cluster scaffold homolog, mitochondrial of Drosophila yakuba (Fruit fly).